The primary structure comprises 303 residues: UDP-3-O-acyl-N-acetylglucosamine deacetylase (303 aa).

3 residues coordinate Zn(2+): histidine 77, histidine 236, and aspartate 240. The Proton donor role is filled by histidine 263.

This sequence belongs to the LpxC family. It depends on Zn(2+) as a cofactor.

It catalyses the reaction a UDP-3-O-[(3R)-3-hydroxyacyl]-N-acetyl-alpha-D-glucosamine + H2O = a UDP-3-O-[(3R)-3-hydroxyacyl]-alpha-D-glucosamine + acetate. It participates in glycolipid biosynthesis; lipid IV(A) biosynthesis; lipid IV(A) from (3R)-3-hydroxytetradecanoyl-[acyl-carrier-protein] and UDP-N-acetyl-alpha-D-glucosamine: step 2/6. Catalyzes the hydrolysis of UDP-3-O-myristoyl-N-acetylglucosamine to form UDP-3-O-myristoylglucosamine and acetate, the committed step in lipid A biosynthesis. This chain is UDP-3-O-acyl-N-acetylglucosamine deacetylase, found in Ruthia magnifica subsp. Calyptogena magnifica.